Here is a 28-residue protein sequence, read N- to C-terminus: Humanin-like 2 (28 aa).

This sequence belongs to the humanin family. In terms of tissue distribution, highly expressed in testis. Also expressed in kidney, heart, skeletal muscles and brain.

It localises to the secreted. The protein localises to the cytoplasm. Functionally, plays a role as a neuroprotective and antiapoptotic factor. The polypeptide is Humanin-like 2 (Homo sapiens (Human)).